A 101-amino-acid chain; its full sequence is Replication restart protein PriB (101 aa).

Positions 1-101 (MTTNNLVLSG…IHAENVELKT (101 aa)) constitute an SSB domain.

The protein belongs to the PriB family. As to quaternary structure, homodimer. Interacts with PriA and DnaT. Component of the replication restart primosome. Primosome assembly occurs via a 'hand-off' mechanism. PriA binds to replication forks, subsequently PriB then DnaT bind; DnaT then displaces ssDNA to generate the helicase loading substrate.

Its function is as follows. Involved in the restart of stalled replication forks, which reloads the replicative helicase on sites other than the origin of replication; the PriA-PriB pathway is the major replication restart pathway. During primosome assembly it facilitates complex formation between PriA and DnaT on DNA; stabilizes PriA on DNA. Stimulates the DNA unwinding activity of PriA helicase. In Shewanella baltica (strain OS223), this protein is Replication restart protein PriB.